A 288-amino-acid chain; its full sequence is METSPQFRLIFAVIISSLIAFRSYKRKSLDLSGGIAGFLVMTIHFTAGFRYGALLLVFFLTSSKLTKVGEDKKRRVDVEFKEGGQRNWVQVLCNSGIASVLVVIACTLTGWKDKCLDSKQSEIVTALIGGIIGHYACCNGDTWSSELGVLSDAQPRLITTFKPVKKGTNGGVTKAGLLAALAAGTTVGLTFLIFGLFTASCASDVALKQLLVIPLSALAGLCGSLIDSILGATIQFSGFCSVRNKVVGKPGPTVKKISGVDILDNNGVNFVSILLTSFLTSIASVYIF.

A run of 7 helical transmembrane segments spans residues 1-21 (METS…LIAF), 29-49 (LDLS…TAGF), 91-111 (VLCN…LTGW), 123-143 (IVTA…GDTW), 177-197 (LLAA…FGLF), 210-230 (LLVI…DSIL), and 268-288 (VNFV…VYIF).

Belongs to the TMEM19 family. In terms of tissue distribution, expressed in the vasculature of leaves, roots, inflorescences, siliques, anther filaments and sepals. Detected primarily in the phloem tissues, including in the root ans shoot apical meristems.

It localises to the cell membrane. Functionally, involved in the glucose-triggered developmental leaf growth process. The chain is Protein PGR from Arabidopsis thaliana (Mouse-ear cress).